Reading from the N-terminus, the 416-residue chain is Imidazolonepropionase (416 aa).

Fe(3+) contacts are provided by His-82 and His-84. Residues His-82 and His-84 each contribute to the Zn(2+) site. Positions 91, 154, and 187 each coordinate 4-imidazolone-5-propanoate. Residue Tyr-154 coordinates N-formimidoyl-L-glutamate. His-252 is a binding site for Fe(3+). His-252 serves as a coordination point for Zn(2+). Glu-255 serves as a coordination point for 4-imidazolone-5-propanoate. Asp-326 is a binding site for Fe(3+). Asp-326 is a binding site for Zn(2+). Residues Asn-328 and Gly-330 each contribute to the N-formimidoyl-L-glutamate site. 4-imidazolone-5-propanoate is bound at residue Ser-331.

The protein belongs to the metallo-dependent hydrolases superfamily. HutI family. Zn(2+) is required as a cofactor. The cofactor is Fe(3+).

It localises to the cytoplasm. The enzyme catalyses 4-imidazolone-5-propanoate + H2O = N-formimidoyl-L-glutamate. The protein operates within amino-acid degradation; L-histidine degradation into L-glutamate; N-formimidoyl-L-glutamate from L-histidine: step 3/3. Its function is as follows. Catalyzes the hydrolytic cleavage of the carbon-nitrogen bond in imidazolone-5-propanoate to yield N-formimidoyl-L-glutamate. It is the third step in the universal histidine degradation pathway. The protein is Imidazolonepropionase of Parabacteroides distasonis (strain ATCC 8503 / DSM 20701 / CIP 104284 / JCM 5825 / NCTC 11152).